We begin with the raw amino-acid sequence, 711 residues long: MDIEDEENMSSSSIDVKENRNLDNMPPKDSSTPGPGEGIPLSNGGGGSTSRKRPLEEGSNGHSKYRLKKRRKTPGPVLPKNALMQLNEIKPGLQYMLLSQTGPVHAPLFVMSVEVNGQVFEGSGPTKKKAKLHAAEKALRSFVQFPNASEAHLAMGRTLSVNTDFTSDQADFPDTLFNGFETPDKSEPPFYVGSNGDDSFSSSGDVSLSASPVPASLTQPPLPIPPPFPPPSGKNPVMILNELRPGLKYDFLSESGESHAKSFVMSVVVDGQFFEGSGRNKKLAKARAAQSALATVFNLHLDQTPSRQPVLSEGLQLHLPQVLADAVSRLVLGKFSDLTDNFSSPHARRKVLSGVVMTTGTDVKDAKVISVSTGTKCINGEYMSDRGLALNDCHAEIISRRSLLRFLYAQLELYLNNKEDQKKSIFQKSERGGFRLKDTVQFHLYISTSPCGDARIFSPHEPVLEGMAPDSHQLTEPADRHPNRKARGQLRTKIESGEGTIPVRSNASIQTWDGVLQGERLLTMSCSDKIARWNVVGIQGALLSIFVEPIYFSSIILGSLYHGDHLSRAMYQRISNIEDLPPLYTLNKPLLSGISNAEARQPGKAPNFSVNWTVGDTAIEVINATTGKDELGRPSRLCKHALYCRWMRVHGKVPPHLLRTKITKPTTYHESKLAAKEYQAAKARLFTAFIKAGLGAWVEKPTEQDQFSFTP.

The disordered stretch occupies residues 1-79; sequence MDIEDEENMS…RRKTPGPVLP (79 aa). Residues 63-73 are compositionally biased toward basic residues; it reads SKYRLKKRRKT. The DRBM 1 domain maps to 78 to 144; the sequence is LPKNALMQLN…AEKALRSFVQ (67 aa). Interaction with substrate RNA regions lie at residues 83–88 and 104–105; these read LMQLNE and VH. Ser-149 carries the phosphoserine modification. The segment at 176–220 is disordered; the sequence is LFNGFETPDKSEPPFYVGSNGDDSFSSSGDVSLSASPVPASLTQP. Residues 192–213 are compositionally biased toward low complexity; that stretch reads VGSNGDDSFSSSGDVSLSASPV. In terms of domain architecture, DRBM 2 spans 231-298; the sequence is PSGKNPVMIL…AQSALATVFN (68 aa). Interaction with substrate RNA regions lie at residues 237 to 242 and His-259; that span reads VMILNE. Positions 370 to 707 constitute an A to I editase domain; the sequence is SVSTGTKCIN…VEKPTEQDQF (338 aa). His-394 is a Zn(2+) binding site. The active-site Proton donor is the Glu-396. 1D-myo-inositol hexakisphosphate-binding residues include Arg-400 and Arg-401. Residues Cys-451 and Cys-526 each coordinate Zn(2+). Residues Lys-529, Arg-532, Lys-639, Lys-672, Lys-682, and Lys-700 each contribute to the 1D-myo-inositol hexakisphosphate site.

Homodimer. Homodimerization is essential for its catalytic activity. Can form heterodimers with isoform 5 of ADAR/ADAR1. 1D-myo-inositol hexakisphosphate is required as a cofactor. In terms of tissue distribution, brain and peripheral tissues.

The protein resides in the nucleus. It is found in the nucleolus. The catalysed reaction is adenosine in double-stranded RNA + H2O + H(+) = inosine in double-stranded RNA + NH4(+). In terms of biological role, catalyzes the hydrolytic deamination of adenosine to inosine in double-stranded RNA (dsRNA) referred to as A-to-I RNA editing. This may affect gene expression and function in a number of ways that include mRNA translation by changing codons and hence the amino acid sequence of proteins; pre-mRNA splicing by altering splice site recognition sequences; RNA stability by changing sequences involved in nuclease recognition; genetic stability in the case of RNA virus genomes by changing sequences during viral RNA replication; and RNA structure-dependent activities such as microRNA production or targeting or protein-RNA interactions. Can edit both viral and cellular RNAs and can edit RNAs at multiple sites (hyper-editing) or at specific sites (site-specific editing). Its cellular RNA substrates include: bladder cancer-associated protein (BLCAP), neurotransmitter receptors for glutamate (GRIA2 and GRIK2) and serotonin (HTR2C), GABA receptor (GABRA3) and potassium voltage-gated channel (KCNA1). Site-specific RNA editing of transcripts encoding these proteins results in amino acid substitutions which consequently alter their functional activities. Edits GRIA2 at both the Q/R and R/G sites efficiently but converts the adenosine in hotspot1 much less efficiently. Can inhibit cell proliferation and migration and can stimulate exocytosis. The chain is Double-stranded RNA-specific editase 1 (Adarb1) from Rattus norvegicus (Rat).